Consider the following 687-residue polypeptide: TWiK family of potassium channels protein 12 (687 aa).

Residues 1–21 (MTLFQKLQWFCQLIRLRAYYK) are Cytoplasmic-facing. The helical transmembrane segment at 22 to 42 (FLLLIAYTLFGAWLFRFYELQ) threads the bilayer. Residues asparagine 53, asparagine 77, and asparagine 98 are each glycosylated (N-linked (GlcNAc...) asparagine). The pore-forming intramembrane region spans 112–132 (WTWTGAMFYAGQLYTTIGYGY). Residues 142-162 (ICTVLYALFGIPCFLMYLKAI) form a helical membrane-spanning segment. Over 163-212 (GKTLSKRLKKIYKRVRRSAFGKFLLPTRVTATKDGFEDPDASAEERKRKP) the chain is Cytoplasmic. Residues 213-233 (FPIPIAIILLIIWICFSASMF) traverse the membrane as a helical segment. An intramembrane region (pore-forming) is located at residues 242-262 (FPSAVYFFIVSISTVGLGDML). The chain crosses the membrane as a helical span at residues 270-290 (VFNFLLILFGLALLSMCFELI). The Cytoplasmic portion of the chain corresponds to 291–687 (TDRIAKWKQK…SKRDAPVNIV (397 aa)). The segment at 661–687 (SPSTSTSTSMIDSGYDLSKRDAPVNIV) is disordered. Residues 677 to 687 (LSKRDAPVNIV) show a composition bias toward basic and acidic residues.

It belongs to the two pore domain potassium channel (TC 1.A.1.8) family.

It is found in the membrane. The protein is TWiK family of potassium channels protein 12 of Caenorhabditis briggsae.